Consider the following 196-residue polypeptide: Carnitine operon protein CaiE (196 aa).

The segment at 173 to 196 (TQPLRQMEENRPRLQGTTDVTPKR) is disordered. Polar residues predominate over residues 187 to 196 (QGTTDVTPKR).

This sequence belongs to the transferase hexapeptide repeat family.

It participates in amine and polyamine metabolism; carnitine metabolism. Overproduction of CaiE stimulates the activity of CaiB and CaiD. The chain is Carnitine operon protein CaiE from Escherichia coli O6:K15:H31 (strain 536 / UPEC).